The chain runs to 254 residues: GTP cyclohydrolase III (254 aa).

Belongs to the archaeal-type GTP cyclohydrolase family.

The catalysed reaction is GTP + 3 H2O = 2-amino-5-formylamino-6-(5-phospho-D-ribosylamino)pyrimidin-4(3H)-one + 2 phosphate + 2 H(+). Functionally, catalyzes the formation of 2-amino-5-formylamino-6-ribofuranosylamino-4(3H)-pyrimidinone ribonucleotide monophosphate and inorganic phosphate from GTP. Also has an independent pyrophosphate phosphohydrolase activity. The polypeptide is GTP cyclohydrolase III (Methanobrevibacter smithii (strain ATCC 35061 / DSM 861 / OCM 144 / PS)).